A 510-amino-acid chain; its full sequence is Flavonoid 3',5'-hydroxylase (510 aa).

Cys-447 contacts heme.

Belongs to the cytochrome P450 family. Requires heme as cofactor.

It carries out the reaction a 3',5'-unsubstituted flavanone + 2 reduced [NADPH--hemoprotein reductase] + 2 O2 = a 3',5'-dihydroxyflavanone + 2 oxidized [NADPH--hemoprotein reductase] + 2 H2O + 2 H(+). It functions in the pathway pigment biosynthesis; anthocyanin biosynthesis. Its function is as follows. Catalyzes the 3'5'-hydroxylation of naringenin and eriodictyol to form 5,7,3,'4',5'-pentahydroxyflavanone and 3',5'-hydroxylation of dihydrokaempferol and dihydroquercetin to form dihydromyricetin. This is Flavonoid 3',5'-hydroxylase (CYP75A5) from Eustoma exaltatum subsp. russellianum (Bluebells).